Consider the following 522-residue polypeptide: Tetratricopeptide repeat and J domain-containing co-chaperone DNJ1 (522 aa).

Positions 1–22 (MKGFLLVALPVLFLSLSTQVFG) are cleaved as a signal peptide. TPR repeat units lie at residues 29–62 (AAQIVQNANRLLAEGSYSAAARAYGEAIELDPTG), 63–96 (YANYYKRATAYLSMGRHNAALDDFEQILRINPGF), 97–130 (VQAHYQRAKILAKEGDFAKAQYELKAYVRTKSDS), 142–175 (GEAAEKSALQAFEKGKWQVCVEHSTKALEVGPNS), 210–243 (TYLPLQLSNIAYFIRASSQAAAHIKQCLHFDPDS), 256–289 (LEKDAARVRNFIESGTYRQAIKILDGDDGLLVRF), and 356–389 (VDSWISRGERLLRVEKWEEAMRAVEKAFELSGRS). Residues 410 to 471 (DYYKVLGVPR…ELRQRYDNGD (62 aa)) form the J domain. The segment at 465–494 (QRYDNGDDPNDPTGGQQHNPFAHHGGGMPF) is disordered.

The protein localises to the endoplasmic reticulum lumen. In terms of biological role, endoplasmic reticulum co-chaperone crucial for survival and virulence factor production at elevated temperatures representative of febrile patients during infection. Contributes to virulence in a mouse model of cryptococcosis. With chaperone CNE1, coordinately maintains ER homeostasis and contributes to maintenance of cell wall architecture. The chain is Tetratricopeptide repeat and J domain-containing co-chaperone DNJ1 from Cryptococcus neoformans var. grubii serotype A (strain H99 / ATCC 208821 / CBS 10515 / FGSC 9487) (Filobasidiella neoformans var. grubii).